Here is a 221-residue protein sequence, read N- to C-terminus: GTP cyclohydrolase 1 (221 aa).

3 residues coordinate Zn(2+): cysteine 109, histidine 112, and cysteine 180.

This sequence belongs to the GTP cyclohydrolase I family. In terms of assembly, toroid-shaped homodecamer, composed of two pentamers of five dimers.

The catalysed reaction is GTP + H2O = 7,8-dihydroneopterin 3'-triphosphate + formate + H(+). It functions in the pathway cofactor biosynthesis; 7,8-dihydroneopterin triphosphate biosynthesis; 7,8-dihydroneopterin triphosphate from GTP: step 1/1. This chain is GTP cyclohydrolase 1, found in Sodalis glossinidius (strain morsitans).